A 674-amino-acid polypeptide reads, in one-letter code: Probable L-type lectin-domain containing receptor kinase I.5 (674 aa).

The first 22 residues, 1-22, serve as a signal peptide directing secretion; that stretch reads MSKGLFLIWLISSFHLISFSTS. At 23-286 the chain is on the extracellular side; sequence SKDTSFVFNG…RPRAEHKKVQ (264 aa). A legume-lectin like region spans residues 25–258; it reads DTSFVFNGFG…YHYLLGWSFS (234 aa). Asparagine 124, asparagine 181, asparagine 185, asparagine 204, and asparagine 225 each carry an N-linked (GlcNAc...) asparagine glycan. Residues 287–307 form a helical membrane-spanning segment; the sequence is FALIIALPVILAIVVMAVLAG. Residues 308 to 674 lie on the Cytoplasmic side of the membrane; it reads VYYHRKKKYA…DHEQPLEFKS (367 aa). Residues 344 to 625 form the Protein kinase domain; the sequence is FHKDRFLGRG…LPLPDFSPYT (282 aa). ATP contacts are provided by residues 350-358 and lysine 372; that span reads LGRGGFGEV. Aspartate 468 serves as the catalytic Proton acceptor. Positions 649 to 662 are enriched in low complexity; it reads NWSAPSASSSSANN. Positions 649–674 are disordered; sequence NWSAPSASSSSANNSKDHEQPLEFKS. Positions 663–674 are enriched in basic and acidic residues; it reads SKDHEQPLEFKS.

The protein in the C-terminal section; belongs to the protein kinase superfamily. Ser/Thr protein kinase family. In the N-terminal section; belongs to the leguminous lectin family.

The protein localises to the cell membrane. The enzyme catalyses L-seryl-[protein] + ATP = O-phospho-L-seryl-[protein] + ADP + H(+). It catalyses the reaction L-threonyl-[protein] + ATP = O-phospho-L-threonyl-[protein] + ADP + H(+). This chain is Probable L-type lectin-domain containing receptor kinase I.5 (LECRK15), found in Arabidopsis thaliana (Mouse-ear cress).